We begin with the raw amino-acid sequence, 306 residues long: Dermonecrotic toxin LiSicTox-alphaIA1a (306 aa).

Residues 1–18 (MLPYIVLVLGCWSVLSQA) form the signal peptide. A propeptide spanning residues 19 to 26 (AQTDDEER) is cleaved from the precursor. Residue histidine 38 is part of the active site. The Mg(2+) site is built by glutamate 58 and aspartate 60. Catalysis depends on histidine 74, which acts as the Nucleophile. 2 cysteine pairs are disulfide-bonded: cysteine 78-cysteine 84 and cysteine 80-cysteine 223. Aspartate 118 is a Mg(2+) binding site.

It belongs to the arthropod phospholipase D family. Class II subfamily. Class IIa sub-subfamily. The cofactor is Mg(2+). In terms of tissue distribution, expressed by the venom gland.

The protein localises to the secreted. It carries out the reaction an N-(acyl)-sphingosylphosphocholine = an N-(acyl)-sphingosyl-1,3-cyclic phosphate + choline. It catalyses the reaction an N-(acyl)-sphingosylphosphoethanolamine = an N-(acyl)-sphingosyl-1,3-cyclic phosphate + ethanolamine. The catalysed reaction is a 1-acyl-sn-glycero-3-phosphocholine = a 1-acyl-sn-glycero-2,3-cyclic phosphate + choline. The enzyme catalyses a 1-acyl-sn-glycero-3-phosphoethanolamine = a 1-acyl-sn-glycero-2,3-cyclic phosphate + ethanolamine. It carries out the reaction 1-hexadecanoyl-sn-glycero-3-phosphocholine = 1-hexadecanoyl-sn-glycero-2,3-cyclic phosphate + choline. Its activity is regulated as follows. Catalytic activity and hemolysis are inhibited by divalent ion chelators (1,10-phenanthroline, EDTA, and EGTA). Functionally, dermonecrotic toxins cleave the phosphodiester linkage between the phosphate and headgroup of certain phospholipids (sphingolipid and lysolipid substrates), forming an alcohol (often choline) and a cyclic phosphate. This toxin acts on sphingomyelin (SM) with high activity. It discriminate between the number of carbon atoms in the substrates, since it prefers SM with six carbons in the fatty acid chain (SM6:0) to other SMs (SM12:0 &gt; SM16:0 &gt; SM18:0 &gt; SM2:0 &gt; SM24:0). It also acts on lysophosphatidylcholine (LPC) (LPC16:0 = LPC12:0 &gt; LPC18:0), and lyso-platelet activating factor (LPAF, an alkyl-LPC) but not on phosphatidylcholine (PC). It may also act on ceramide phosphoethanolamine (CPE), lysophosphatidylcholine (LPC) and lysophosphatidylethanolamine (LPE), but not on lysophosphatidylserine (LPS), and lysophosphatidylglycerol (LPG). It acts by transphosphatidylation, releasing exclusively cyclic phosphate products as second products. In vivo, it induces dermonecrosis, vascular permeability, platelet aggregation, inflammatory response, edema and cytotoxicity against renal epithelial cells. It causes direct nephrotoxicity and is directly toxic to liver. It also induces hemolysis in a complement-dependent manner as well as in a complement-independent manner. The hemolysis provoked in a complement-independent manner is composed of several steps. The toxin binds to erythrocyte membranes, hydrolyzes membrane phospholipids (SM and LPC) thus generating metabolism products that cause hemolysis, probably by provoking an increase of calcium inside cells. The calcium influx is due to the opening of L-type calcium channels, since L-type calcium channel blockers inhibit calcium influx. Is lethal to mice when intraperitoneally injected. The chain is Dermonecrotic toxin LiSicTox-alphaIA1a from Loxosceles intermedia (Brown spider).